Here is a 220-residue protein sequence, read N- to C-terminus: Cytidylate kinase (220 aa).

ATP is bound at residue glycine 9–threonine 17.

Belongs to the cytidylate kinase family. Type 1 subfamily.

The protein localises to the cytoplasm. It carries out the reaction CMP + ATP = CDP + ADP. It catalyses the reaction dCMP + ATP = dCDP + ADP. The chain is Cytidylate kinase from Thermotoga neapolitana (strain ATCC 49049 / DSM 4359 / NBRC 107923 / NS-E).